A 1181-amino-acid chain; its full sequence is Poly [ADP-ribose] polymerase tankyrase (1181 aa).

ANK repeat units follow at residues 56-85 (RKST…SIQA), 89-118 (GGLH…SPNT), 122-151 (WNYT…NHTI), 209-238 (RRST…DVHA), 242-271 (GGLV…NVNA), 275-304 (WAFT…DPTL), 362-394 (TGDT…LLNE), 398-427 (AFLT…KVNA), 431-458 (LGQT…DTNI), 483-513 (DSET…SVNC), 519-548 (RHST…EVYA), 552-581 (GGLV…NVNV), 585-614 (WKFT…DPMK), 638-668 (RGPS…NCRD), 672-701 (RNST…DVNA), 705-734 (GGLI…VVNA), 738-767 (WGFT…DAYM), and 771-799 (EGQT…LSQQ). Disordered stretches follow at residues 807 to 834 (SLTS…SAIL) and 864 to 886 (RISP…DLLP). The SAM domain maps to 889 to 952 (DTITNVSGFL…LKGIAQLRST (64 aa)). Residues 969 to 1174 (LPDDKEFVAV…YQIVKPDDSS (206 aa)) form the PARP catalytic domain. Positions 1091, 1094, 1099, and 1102 each coordinate Zn(2+).

Belongs to the ARTD/PARP family. In terms of assembly, interacts (via ANK repeats) with PI31.

The catalysed reaction is NAD(+) + (ADP-D-ribosyl)n-acceptor = nicotinamide + (ADP-D-ribosyl)n+1-acceptor + H(+).. It carries out the reaction L-aspartyl-[protein] + NAD(+) = 4-O-(ADP-D-ribosyl)-L-aspartyl-[protein] + nicotinamide. It catalyses the reaction L-glutamyl-[protein] + NAD(+) = 5-O-(ADP-D-ribosyl)-L-glutamyl-[protein] + nicotinamide. Stimulates proteasome activity, probably by ADP-ribosylation of PI31. Modulates 26S proteasome assembly. The chain is Poly [ADP-ribose] polymerase tankyrase from Drosophila melanogaster (Fruit fly).